The chain runs to 1447 residues: Baculoviral IAP repeat-containing protein 1b (1447 aa).

BIR repeat units lie at residues 60–127 (EAKR…CEFL), 159–227 (EEAR…CEFL), and 278–345 (EELR…CVFL). Residues Cys-315, Cys-318, His-335, and Cys-342 each contribute to the Zn(2+) site. The NACHT domain occupies 508–802 (SVMCVEGEAG…EFLAAVRLTE (295 aa)). Lys-520 contacts ATP.

In terms of assembly, component of the NLRC4 inflammasome, at least composed of NLRC4, caspase-1 (CASP1) and some NAIP protein. Interacts with S.typhimurium (Salmonella) PrgJ and B.thailandensis BsaK.

In terms of biological role, sensor component of the NLRC4 inflammasome that specifically recognizes and binds type III secretion system (T3SS) rod proteins such as S.typhimurium (Salmonella) PrgJ and B.thailandensis BsaK from pathogenic bacteria. Association of pathogenic bacteria proteins drives in turn drive assembly and activation of the NLRC4 inflammasome, promoting caspase-1 activation, cytokine production and macrophage pyroptosis. The NLRC4 inflammasome is activated as part of the innate immune response to a range of intracellular bacteria. The NLRC4 inflammasome senses Gram-negative bacteria such as L.pneumophila and P.aeruginosa, enteric pathogens S.typhimurium (Salmonella) and S.flexneri. Prevents motor-neuron apoptosis induced by a variety of signals. The sequence is that of Baculoviral IAP repeat-containing protein 1b (Naip2) from Mus musculus (Mouse).